The following is a 285-amino-acid chain: Protease HtpX homolog (285 aa).

Transmembrane regions (helical) follow at residues 7–27 (TAMLMAAITALFIVIGGMIGG) and 30–50 (GMTIALLFALGMNFFSYWFSD). Histidine 131 contacts Zn(2+). The active site involves glutamate 132. Position 135 (histidine 135) interacts with Zn(2+). 2 consecutive transmembrane segments (helical) span residues 146–166 (ITATMAGAISAIANFAMFFGG) and 177–197 (IAGIAVALLAPIAGALIQMAI). Glutamate 202 is a binding site for Zn(2+).

It belongs to the peptidase M48B family. The cofactor is Zn(2+).

The protein resides in the cell inner membrane. The sequence is that of Protease HtpX homolog from Burkholderia lata (strain ATCC 17760 / DSM 23089 / LMG 22485 / NCIMB 9086 / R18194 / 383).